Reading from the N-terminus, the 166-residue chain is Photosystem I assembly protein Ycf3 (166 aa).

TPR repeat units follow at residues 35-68 (AFTY…EIDP), 72-105 (SYIL…NPSL), and 120-153 (GEQA…APTN).

The protein belongs to the Ycf3 family.

Its subcellular location is the plastid. The protein resides in the chloroplast thylakoid membrane. Essential for the assembly of the photosystem I (PSI) complex. May act as a chaperone-like factor to guide the assembly of the PSI subunits. The protein is Photosystem I assembly protein Ycf3 of Oltmannsiellopsis viridis (Marine flagellate).